The following is a 160-amino-acid chain: SsrA-binding protein (160 aa).

Belongs to the SmpB family.

The protein resides in the cytoplasm. Functionally, required for rescue of stalled ribosomes mediated by trans-translation. Binds to transfer-messenger RNA (tmRNA), required for stable association of tmRNA with ribosomes. tmRNA and SmpB together mimic tRNA shape, replacing the anticodon stem-loop with SmpB. tmRNA is encoded by the ssrA gene; the 2 termini fold to resemble tRNA(Ala) and it encodes a 'tag peptide', a short internal open reading frame. During trans-translation Ala-aminoacylated tmRNA acts like a tRNA, entering the A-site of stalled ribosomes, displacing the stalled mRNA. The ribosome then switches to translate the ORF on the tmRNA; the nascent peptide is terminated with the 'tag peptide' encoded by the tmRNA and targeted for degradation. The ribosome is freed to recommence translation, which seems to be the essential function of trans-translation. This chain is SsrA-binding protein, found in Rhodospirillum rubrum (strain ATCC 11170 / ATH 1.1.1 / DSM 467 / LMG 4362 / NCIMB 8255 / S1).